Reading from the N-terminus, the 436-residue chain is Probable 4-aminobutyrate aminotransferase (436 aa).

An N6-(pyridoxal phosphate)lysine modification is found at lysine 281.

It belongs to the class-III pyridoxal-phosphate-dependent aminotransferase family. Requires pyridoxal 5'-phosphate as cofactor.

It carries out the reaction 4-aminobutanoate + 2-oxoglutarate = succinate semialdehyde + L-glutamate. The enzyme catalyses (S)-3-amino-2-methylpropanoate + 2-oxoglutarate = 2-methyl-3-oxopropanoate + L-glutamate. The protein operates within amino-acid degradation; 4-aminobutanoate degradation. The polypeptide is Probable 4-aminobutyrate aminotransferase (gabT) (Bacillus subtilis (strain 168)).